The primary structure comprises 437 residues: Serine carboxypeptidase-like 17 (437 aa).

Positions 1–26 (MGKECYYLSWILKFHLLLVLIQLVDS) are cleaved as a signal peptide. 3 disulfide bridges follow: Cys-85–Cys-327, Cys-249–Cys-263, and Cys-287–Cys-293. N-linked (GlcNAc...) asparagine glycosylation occurs at Asn-106. Ser-181 is a catalytic residue. Asp-362 is an active-site residue. Asn-378 is a glycosylation site (N-linked (GlcNAc...) asparagine). Residue His-415 is part of the active site.

Belongs to the peptidase S10 family. As to expression, expressed in seedlings and siliques.

It localises to the secreted. Functionally, probable carboxypeptidase. The chain is Serine carboxypeptidase-like 17 (SCPL17) from Arabidopsis thaliana (Mouse-ear cress).